Reading from the N-terminus, the 417-residue chain is Tyrosine--tRNA ligase (417 aa).

Tyr-39 serves as a coordination point for L-tyrosine. The 'HIGH' region motif lies at 44-53; sequence CTARSLHIGN. L-tyrosine is bound by residues Tyr-176 and Gln-180. The 'KMSKS' region signature appears at 236-240; it reads KMGKT. Lys-239 lines the ATP pocket. The S4 RNA-binding domain occupies 350–417; it reads FGVLNAFVKA…KKKHILIKPA (68 aa).

This sequence belongs to the class-I aminoacyl-tRNA synthetase family. TyrS type 1 subfamily. In terms of assembly, homodimer.

The protein resides in the cytoplasm. The catalysed reaction is tRNA(Tyr) + L-tyrosine + ATP = L-tyrosyl-tRNA(Tyr) + AMP + diphosphate + H(+). Catalyzes the attachment of tyrosine to tRNA(Tyr) in a two-step reaction: tyrosine is first activated by ATP to form Tyr-AMP and then transferred to the acceptor end of tRNA(Tyr). This is Tyrosine--tRNA ligase from Bradyrhizobium diazoefficiens (strain JCM 10833 / BCRC 13528 / IAM 13628 / NBRC 14792 / USDA 110).